The sequence spans 181 residues: Large ribosomal subunit protein uL10 (181 aa).

It belongs to the universal ribosomal protein uL10 family. As to quaternary structure, part of the ribosomal stalk of the 50S ribosomal subunit. The N-terminus interacts with L11 and the large rRNA to form the base of the stalk. The C-terminus forms an elongated spine to which L12 dimers bind in a sequential fashion forming a multimeric L10(L12)X complex.

Forms part of the ribosomal stalk, playing a central role in the interaction of the ribosome with GTP-bound translation factors. The protein is Large ribosomal subunit protein uL10 of Acidobacterium capsulatum (strain ATCC 51196 / DSM 11244 / BCRC 80197 / JCM 7670 / NBRC 15755 / NCIMB 13165 / 161).